The chain runs to 330 residues: DNA-directed RNA polymerase subunit alpha (330 aa).

Positions 1-229 are alpha N-terminal domain (alpha-NTD); it reads MKNIKFIKPF…DHFNVLVELS (229 aa). An alpha C-terminal domain (alpha-CTD) region spans residues 245–330; that stretch reads AHNSVLDLEI…HSVEEDKDKH (86 aa).

This sequence belongs to the RNA polymerase alpha chain family. In terms of assembly, homodimer. The RNAP catalytic core consists of 2 alpha, 1 beta, 1 beta' and 1 omega subunit. When a sigma factor is associated with the core the holoenzyme is formed, which can initiate transcription.

The catalysed reaction is RNA(n) + a ribonucleoside 5'-triphosphate = RNA(n+1) + diphosphate. In terms of biological role, DNA-dependent RNA polymerase catalyzes the transcription of DNA into RNA using the four ribonucleoside triphosphates as substrates. This chain is DNA-directed RNA polymerase subunit alpha, found in Onion yellows phytoplasma (strain OY-M).